The chain runs to 1310 residues: Angiotensin-converting enzyme (1310 aa).

Positions 1–33 are cleaved as a signal peptide; the sequence is MGAAPGRRGPRLLRPPPPLLLLLLLLRPPPAAL. Topologically, residues 34–1260 are extracellular; sequence TLDPGLLPGD…GMNLDAQQAR (1227 aa). 2 consecutive Peptidase M2 domains span residues 45–628 and 647–1226; these read AADE…LGWP and VTDE…LGWP. N-linked (GlcNAc...) asparagine glycans are attached at residues Asn59, Asn79, and Asn151. An intrachain disulfide couples Cys162 to Cys170. Tyr236 provides a ligand contact to chloride. Residue Asn323 is glycosylated (N-linked (GlcNAc...) asparagine). A disulfide bridge connects residues Cys364 and Cys382. A Zn(2+)-binding site is contributed by His395. Glu396 acts as the Proton acceptor 1 in catalysis. Zn(2+) contacts are provided by His399 and Glu422. Asn449 and Asn513 each carry an N-linked (GlcNAc...) asparagine glycan. His524 functions as the Proton donor 1 in the catalytic mechanism. Arg533 lines the chloride pocket. A disulfide bridge links Cys549 with Cys561. 3 N-linked (GlcNAc...) asparagine glycosylation sites follow: Asn681, Asn699, and Asn718. The cysteines at positions 761 and 767 are disulfide-linked. 2 residues coordinate chloride: Arg795 and Tyr833. A glycan (N-linked (GlcNAc...) asparagine) is linked at Asn946. Cys961 and Cys979 are oxidised to a cystine. Zn(2+) is bound at residue His992. Glu993 serves as the catalytic Proton acceptor 2. Residues His996 and Glu1020 each coordinate Zn(2+). Positions 1094 and 1098 each coordinate chloride. His1122 (proton donor 2) is an active-site residue. Arg1131 contacts chloride. Cys1147 and Cys1159 are joined by a disulfide. The N-linked (GlcNAc...) asparagine glycan is linked to Asn1195. The segment at 1219–1260 is juxtamembrane stalk; sequence HGEKLGWPQYTWTPNSARSEGSLPDSGRVNFLGMNLDAQQAR. A helical membrane pass occupies residues 1261–1281; it reads VGQWVLLFLGVALLLASLGLT. Topologically, residues 1282–1310 are cytoplasmic; the sequence is QRLFSIRYQSLRQPHHGPQFGSEVELRHS. Ser1303 carries the post-translational modification Phosphoserine.

Belongs to the peptidase M2 family. Monomer and homodimer; homodimerizes following binding to an inhibitor. Interacts with calmodulin (CALM1, CALM2 or CALM3); interaction takes place in the cytoplasmic region and regulates phosphorylation and proteolytic cleavage. Zn(2+) is required as a cofactor. The cofactor is chloride. Post-translationally, N-glycosylated. In terms of processing, phosphorylated by CK2 on Ser-1303; which allows membrane retention. Phosphorylated on tyrosine residues on its extracellular part, promoting cleavage by secretase enzymes and formation of the soluble form (Angiotensin-converting enzyme, soluble form). Produced following proteolytic cleavage by secretase enzymes that cleave the transmembrane form in the juxtamembrane stalk region upstream of the transmembrane region. Cleavage can take place at different sites of the juxtamembrane stalk region. In terms of tissue distribution, testis-specific isoform is expressed in spermatocytes, adult testis.

Its subcellular location is the cell membrane. It localises to the cytoplasm. The protein resides in the secreted. The catalysed reaction is Release of a C-terminal dipeptide, oligopeptide-|-Xaa-Yaa, when Xaa is not Pro, and Yaa is neither Asp nor Glu. Thus, conversion of angiotensin I to angiotensin II, with increase in vasoconstrictor activity, but no action on angiotensin II.. It carries out the reaction angiotensin I + H2O = L-histidyl-L-leucine + angiotensin II. It catalyses the reaction bradykinin + H2O = L-Phe-L-Arg + bradykinin(1-7). The enzyme catalyses substance P + H2O = substance P(1-9) + L-Leu-L-Met-NH2. The catalysed reaction is substance P + H2O = substance P(1-8) + Gly-L-Leu-L-Met-NH2. It carries out the reaction substance P + H2O = L-Phe-L-Phe-Gly-L-Leu-L-Met-NH2 + substance P(1-6). It catalyses the reaction neurotensin + H2O = neurotensin(1-11) + L-isoleucyl-L-leucine. The enzyme catalyses goralatide + H2O = N-acetyl-L-seryl-L-aspartate + L-lysyl-L-proline. The catalysed reaction is Met-enkephalin + H2O = L-phenylalanyl-L-methionine + L-tyrosylglycylglycine. It carries out the reaction Leu-enkephalin + H2O = L-tyrosylglycylglycine + L-phenylalanyl-L-leucine. It catalyses the reaction Met-enkephalin-Arg-Phe + H2O = L-arginyl-L-phenylalanine + Met-enkephalin. The dipeptidyl carboxypeptidase activity is strongly activated by chloride. Specifically inhibited by lisinopril. Inhibited by mixanpril, an orally-active drug used for the treatment of hypertension. With respect to regulation, strongly inhibited by lisinopril and captopril. In terms of biological role, dipeptidyl carboxypeptidase that removes dipeptides from the C-terminus of a variety of circulating hormones, such as angiotensin I, bradykinin or enkephalins, thereby playing a key role in the regulation of blood pressure, electrolyte homeostasis or synaptic plasticity. Composed of two similar catalytic domains, each possessing a functional active site, with different selectivity for substrates. Plays a major role in the angiotensin-renin system that regulates blood pressure and sodium retention by the kidney by converting angiotensin I to angiotensin II, resulting in an increase of the vasoconstrictor activity of angiotensin. Also able to inactivate bradykinin, a potent vasodilator, and therefore enhance the blood pressure response. Acts as a regulator of synaptic transmission by mediating cleavage of neuropeptide hormones, such as substance P, neurotensin or enkephalins. Catalyzes degradation of different enkephalin neuropeptides (Met-enkephalin, Leu-enkephalin, Met-enkephalin-Arg-Phe and possibly Met-enkephalin-Arg-Gly-Leu). Acts as a regulator of synaptic plasticity in the nucleus accumbens of the brain by mediating cleavage of Met-enkephalin-Arg-Phe, a strong ligand of Mu-type opioid receptor OPRM1, into Met-enkephalin. Met-enkephalin-Arg-Phe cleavage by ACE decreases activation of OPRM1, leading to long-term synaptic potentiation of glutamate release. Also acts as a regulator of hematopoietic stem cell differentiation by mediating degradation of hemoregulatory peptide N-acetyl-SDKP (AcSDKP). Acts as a regulator of cannabinoid signaling pathway by mediating degradation of hemopressin, an antagonist peptide of the cannabinoid receptor CNR1. Involved in amyloid-beta metabolism by catalyzing degradation of Amyloid-beta protein 40 and Amyloid-beta protein 42 peptides, thereby preventing plaque formation. Catalyzes cleavage of cholecystokinin (maturation of Cholecystokinin-8 and Cholecystokinin-5) and Gonadoliberin-1 (both maturation and degradation) hormones. Degradation of hemoregulatory peptide N-acetyl-SDKP (AcSDKP) and amyloid-beta proteins is mediated by the N-terminal catalytic domain, while angiotensin I and cholecystokinin cleavage is mediated by the C-terminal catalytic region. Functionally, soluble form that is released in blood plasma and other body fluids following proteolytic cleavage in the juxtamembrane stalk region. Its function is as follows. Isoform produced by alternative promoter usage that is specifically expressed in spermatocytes and adult testis, and which is required for male fertility. In contrast to somatic isoforms, only contains one catalytic domain. Acts as a dipeptidyl carboxypeptidase that removes dipeptides from the C-terminus of substrates. The identity of substrates that are needed for male fertility is unknown. May also have a glycosidase activity which releases GPI-anchored proteins from the membrane by cleaving the mannose linkage in the GPI moiety. The GPIase activity was reported to be essential for the egg-binding ability of the sperm. This activity is however unclear and has been challenged by other groups, suggesting that it may be indirect. The sequence is that of Angiotensin-converting enzyme from Oryctolagus cuniculus (Rabbit).